Consider the following 222-residue polypeptide: Probable nicotinate-nucleotide adenylyltransferase (222 aa).

This sequence belongs to the NadD family.

The enzyme catalyses nicotinate beta-D-ribonucleotide + ATP + H(+) = deamido-NAD(+) + diphosphate. Its pathway is cofactor biosynthesis; NAD(+) biosynthesis; deamido-NAD(+) from nicotinate D-ribonucleotide: step 1/1. Its function is as follows. Catalyzes the reversible adenylation of nicotinate mononucleotide (NaMN) to nicotinic acid adenine dinucleotide (NaAD). This is Probable nicotinate-nucleotide adenylyltransferase from Xylella fastidiosa (strain M12).